The chain runs to 85 residues: Sec-independent protein translocase protein TatA (85 aa).

The chain crosses the membrane as a helical span at residues 1–21 (MGSFSIWHWLIVLVIIMMVFG). Residues 39–51 (FKDGMREGQEDKP) are compositionally biased toward basic and acidic residues. The tract at residues 39–85 (FKDGMREGQEDKPAGSQQPQQTAGQPPRELHDATTIDVEARDKSKQG) is disordered. The span at 53 to 62 (GSQQPQQTAG) shows a compositional bias: polar residues. Positions 66-85 (RELHDATTIDVEARDKSKQG) are enriched in basic and acidic residues.

Belongs to the TatA/E family. In terms of assembly, the Tat system comprises two distinct complexes: a TatABC complex, containing multiple copies of TatA, TatB and TatC subunits, and a separate TatA complex, containing only TatA subunits. Substrates initially bind to the TatABC complex, which probably triggers association of the separate TatA complex to form the active translocon.

It is found in the cell inner membrane. Its function is as follows. Part of the twin-arginine translocation (Tat) system that transports large folded proteins containing a characteristic twin-arginine motif in their signal peptide across membranes. TatA could form the protein-conducting channel of the Tat system. This Ralstonia pickettii (strain 12J) protein is Sec-independent protein translocase protein TatA.